The sequence spans 444 residues: Platelet-activating factor acetylhydrolase (444 aa).

The signal sequence occupies residues 1–21 (MLPPKLHALFCLCSCLTLVHP). 2 N-linked (GlcNAc...) asparagine glycosylation sites follow: N60 and N200. The active-site Nucleophile is the S274. Residues D297 and H352 each act as charge relay system in the active site. A glycan (N-linked (GlcNAc...) asparagine) is linked at N424.

It belongs to the AB hydrolase superfamily. Lipase family. In terms of processing, N-glycosylated. In terms of tissue distribution, plasma.

The protein resides in the secreted. It is found in the extracellular space. The catalysed reaction is a 1-O-alkyl-2-acetyl-sn-glycero-3-phosphocholine + H2O = a 1-O-alkyl-sn-glycero-3-phosphocholine + acetate + H(+). The enzyme catalyses 1-O-decyl-2-acetyl-sn-glycero-3-phosphocholine + H2O = 1-O-decyl-sn-glycero-3-phosphocholine + acetate + H(+). It catalyses the reaction 1-O-dodecyl-2-acetyl-sn-glycero-3-phosphocholine + H2O = 1-O-dodecyl-sn-glycero-3-phosphocholine + acetate + H(+). It carries out the reaction 1-O-tetradecyl-2-acetyl-sn-glycero-3-phosphocholine + H2O = 1-O-tetradecyl-sn-glycero-3-phosphocholine + acetate + H(+). The catalysed reaction is 1-O-hexadecyl-2-acetyl-sn-glycero-3-phosphocholine + H2O = 1-O-hexadecyl-sn-glycero-3-phosphocholine + acetate + H(+). The enzyme catalyses 1-O-octadecyl-2-acetyl-sn-glycero-3-phosphocholine + H2O = 1-O-octadecyl-sn-glycero-3-phosphocholine + acetate + H(+). It catalyses the reaction 1-hexadecanoyl-2-acetyl-sn-glycero-3-phosphocholine + H2O = 1-hexadecanoyl-sn-glycero-3-phosphocholine + acetate + H(+). It carries out the reaction 1-hexadecanoyl-2-propionyl-sn-glycero-3-phosphocholine + H2O = propanoate + 1-hexadecanoyl-sn-glycero-3-phosphocholine + H(+). The catalysed reaction is 1-hexadecanoyl-2-butanoyl-sn-glycero-3-phosphocholine + H2O = butanoate + 1-hexadecanoyl-sn-glycero-3-phosphocholine + H(+). The enzyme catalyses 1-hexadecanoyl-2-pentanoyl-sn-glycero-3-phosphocholine + H2O = pentanoate + 1-hexadecanoyl-sn-glycero-3-phosphocholine + H(+). It catalyses the reaction 1-hexadecanoyl-2-glutaroyl-sn-glycero-3-phosphocholine + H2O = glutarate + 1-hexadecanoyl-sn-glycero-3-phosphocholine + H(+). It carries out the reaction 1-hexadecanoyl-2-(5-oxopentanoyl)-sn-glycero-3-phosphocholine + H2O = 5-oxopentanoate + 1-hexadecanoyl-sn-glycero-3-phosphocholine + H(+). The catalysed reaction is 1-hexadecanoyl-2-(9-oxononanoyl)-sn-glycero-3-phosphocholine + H2O = 9-oxononanoate + 1-hexadecanoyl-sn-glycero-3-phosphocholine + H(+). The enzyme catalyses 1-hexadecanoyl-2-[9-hydroperoxy-(10E-octadecenoyl)]-sn-glycero-3-phosphocholine + H2O = 9-hydroperoxy-10E-octadecenoate + 1-hexadecanoyl-sn-glycero-3-phosphocholine + H(+). It catalyses the reaction 1-hexadecanoyl-2-(10-hydroperoxy-8E-octadecenoyl)-sn-glycero-3-phosphocholine + H2O = 10-hydroperoxy-(8E)-octadecenoate + 1-hexadecanoyl-sn-glycero-3-phosphocholine + H(+). Its function is as follows. Lipoprotein-associated calcium-independent phospholipase A2 involved in phospholipid catabolism during inflammatory and oxidative stress response. At the lipid-aqueous interface, hydrolyzes the ester bond of fatty acyl group attached at sn-2 position of phospholipids (phospholipase A2 activity). Specifically targets phospholipids with a short-chain fatty acyl group at sn-2 position. Can hydrolyze phospholipids with long fatty acyl chains, only if they carry oxidized functional groups. Hydrolyzes and inactivates platelet-activating factor (PAF, 1-O-alkyl-2-acetyl-sn-glycero-3-phosphocholine), a potent pro-inflammatory signaling lipid that acts through PTAFR on various innate immune cells. Hydrolyzes oxidatively truncated phospholipids carrying an aldehyde group at omega position, preventing their accumulation in low-density lipoprotein (LDL) particles and uncontrolled pro-inflammatory effects. As part of high-density lipoprotein (HDL) particles, can hydrolyze phospholipids having long-chain fatty acyl hydroperoxides at sn-2 position and protect against potential accumulation of these oxylipins in the vascular wall. Catalyzes the release from membrane phospholipids of F2-isoprostanes, lipid biomarkers of cellular oxidative damage. This Canis lupus familiaris (Dog) protein is Platelet-activating factor acetylhydrolase (PLA2G7).